Here is a 374-residue protein sequence, read N- to C-terminus: Alanine racemase (374 aa).

The active-site Proton acceptor; specific for D-alanine is the lysine 35. Position 35 is an N6-(pyridoxal phosphate)lysine (lysine 35). Residue arginine 130 coordinates substrate. Residue tyrosine 253 is the Proton acceptor; specific for L-alanine of the active site. Methionine 305 contacts substrate.

Belongs to the alanine racemase family. Pyridoxal 5'-phosphate serves as cofactor.

It catalyses the reaction L-alanine = D-alanine. Its pathway is amino-acid biosynthesis; D-alanine biosynthesis; D-alanine from L-alanine: step 1/1. In terms of biological role, catalyzes the interconversion of L-alanine and D-alanine. May also act on other amino acids. The sequence is that of Alanine racemase (alr) from Ralstonia pickettii (strain 12J).